A 794-amino-acid chain; its full sequence is Ent-kaurene synthase 1, chloroplastic (794 aa).

The transit peptide at 1-28 (MSLLLSNSVLVGPKFRSSRISHASASLD) directs the protein to the chloroplast. Mg(2+) contacts are provided by aspartate 543, aspartate 547, asparagine 687, and glutamate 695. The DDXXD motif signature appears at 543–547 (DDFFD).

The protein belongs to the terpene synthase family. Requires Mg(2+) as cofactor. As to expression, accumulates in leaves, and, at low levels, in germinating seeds.

The protein localises to the plastid. It localises to the chloroplast. The enzyme catalyses ent-copalyl diphosphate = ent-kaur-16-ene + diphosphate. The protein operates within secondary metabolite biosynthesis; terpenoid biosynthesis. It participates in plant hormone biosynthesis; gibberellin biosynthesis. Involved in the biosynthesis of ent-kaurene diterpenoids natural products such as oridonin, miltiradiene, eriocalyxin B and nezukol, known to exhibit antitumor, anti-inflammatory and antibacterial activities, and in the production of gibberellins phytohormones. Catalyzes the conversion of ent-copalyl diphosphate (ent-CPP) to ent-kaurene. The protein is Ent-kaurene synthase 1, chloroplastic of Isodon eriocalyx (Plectranthus eriocalyx).